The primary structure comprises 442 residues: Chitinase-like protein Idgf4 (442 aa).

Positions 1 to 21 (MKLYALFSLLVGSLAIGQISA) are cleaved as a signal peptide. Residues 25–442 (HHLLCYYDGN…PILRQVKSKL (418 aa)) enclose the GH18 domain. Cysteine 29 and cysteine 56 are joined by a disulfide. N-linked (GlcNAc...) asparagine glycosylation occurs at asparagine 224. An intrachain disulfide couples cysteine 343 to cysteine 426.

It belongs to the glycosyl hydrolase 18 family. IDGF subfamily. In terms of processing, glycosylated. Primarily expressed in yolk cells and fat body. In larvae, it is expressed in the imaginal ring, the salivary duct, large salivary gland cells and weakly expressed in imaginal disks. More strongly expressed than Idgf1 and Idgf3.

The protein localises to the secreted. Functionally, cooperates with insulin-like peptides to stimulate the proliferation, polarization and motility of imaginal disk cells. May act by stabilizing the binding of insulin-like peptides to its receptor through a simultaneous interaction with both molecules to form a multiprotein signaling complex. In Drosophila melanogaster (Fruit fly), this protein is Chitinase-like protein Idgf4 (Idgf4).